The following is a 155-amino-acid chain: MITQSALEMRDALAEGGSLIGLDTGTKTIGVALCDREWRFATAGTTIRRTKFAADKAQIRAIVAERGVKGIVIGLPLNMDGSESPRSQGARAMARNLEDLGLPILLWDERWTTQAAERAMIEQDFSRAKRAERIDSHAAALILQGAIDALAGSAF.

This sequence belongs to the YqgF nuclease family.

Its subcellular location is the cytoplasm. In terms of biological role, could be a nuclease involved in processing of the 5'-end of pre-16S rRNA. The chain is Putative pre-16S rRNA nuclease from Novosphingobium aromaticivorans (strain ATCC 700278 / DSM 12444 / CCUG 56034 / CIP 105152 / NBRC 16084 / F199).